The primary structure comprises 464 residues: E3 ubiquitin-protein ligase RNF38 (464 aa).

The tract at residues 1-94 is disordered; the sequence is MRESEDSPSP…NSISQDENYH (94 aa). A Bipartite nuclear localization signal 1 motif is present at residues 6–20; the sequence is DSPSPKRQRLSHSVF. Residues 38 to 53 are compositionally biased toward polar residues; it reads MTSNRQPPSVRPNQHH. The Bipartite nuclear localization signal 2 motif lies at 64 to 79; sequence RNRRSPPVRRQRGRRE. Positions 64 to 83 are enriched in basic residues; that stretch reads RNRRSPPVRRQRGRRERLSR. An RING-type zinc finger spans residues 412–453; it reads CVVCMCDFESRQLLRVLPCNHEFHAKCVDKWLKGNRTCPICR.

It localises to the nucleus. It carries out the reaction S-ubiquitinyl-[E2 ubiquitin-conjugating enzyme]-L-cysteine + [acceptor protein]-L-lysine = [E2 ubiquitin-conjugating enzyme]-L-cysteine + N(6)-ubiquitinyl-[acceptor protein]-L-lysine.. The protein operates within protein modification; protein ubiquitination. Its function is as follows. Acts as an E3 ubiquitin-protein ligase able to ubiquitinate p53/TP53 which promotes its relocalization to discrete foci associated with PML nuclear bodies. Exhibits preference for UBE2D2 as a E2 enzyme. This is E3 ubiquitin-protein ligase RNF38 from Mus musculus (Mouse).